The chain runs to 449 residues: Glutamyl-tRNA(Gln) amidotransferase subunit A (449 aa).

Catalysis depends on charge relay system residues Lys51 and Ser126. A disordered region spans residues 103–128 (STTESSAHGKTLNPVDSSRVPGGSSG). Low complexity predominate over residues 119 to 128 (SSRVPGGSSG). The active-site Acyl-ester intermediate is Ser150.

This sequence belongs to the amidase family. GatA subfamily. In terms of assembly, heterotrimer of A, B and C subunits.

It catalyses the reaction L-glutamyl-tRNA(Gln) + L-glutamine + ATP + H2O = L-glutaminyl-tRNA(Gln) + L-glutamate + ADP + phosphate + H(+). Allows the formation of correctly charged Gln-tRNA(Gln) through the transamidation of misacylated Glu-tRNA(Gln) in organisms which lack glutaminyl-tRNA synthetase. The reaction takes place in the presence of glutamine and ATP through an activated gamma-phospho-Glu-tRNA(Gln). The polypeptide is Glutamyl-tRNA(Gln) amidotransferase subunit A (Wolinella succinogenes (strain ATCC 29543 / DSM 1740 / CCUG 13145 / JCM 31913 / LMG 7466 / NCTC 11488 / FDC 602W) (Vibrio succinogenes)).